We begin with the raw amino-acid sequence, 388 residues long: Subtilisin-like serine protease AsES (388 aa).

Residues 1–15 (MRLSLVLALLPVAFG) form the signal peptide. A propeptide spans 16–105 (APTRRDEPAP…IEQDAIVTLA (90 aa)) (removed in mature form). The 275-residue stretch at 114–388 (PWGLARISTR…RLAFNGNPSG (275 aa)) folds into the Peptidase S8 domain. Cysteines 141 and 230 form a disulfide. Catalysis depends on charge relay system residues D146 and H176. N-linked (GlcNAc...) asparagine glycosylation is found at N232 and N237. Cysteines 285 and 357 form a disulfide. Catalysis depends on S331, which acts as the Charge relay system.

It belongs to the peptidase S8 family.

It localises to the secreted. Its activity is regulated as follows. The elicitor proteolytic activity is completely inhibited by PMSF. The activity is also significantly reduced by aprotinin (leading to 37% residual activity), by leupeptin (leading to 54% residual activity), by the ovomucoid trypsin inhibitor (leading to 65% residual activity), and by p-aminobenzamidine (leading to 26% residual activity). In terms of biological role, extracellular elicitor protein that induces a strong defense response in strawberry and confers both local and systemic plant resistance against the fungal pathogen Colletotricum acutatum, the casual agent of anthracnose disease. AsES activates a cascade of defense responses, including calcium influx, oxidative burst, hypersensitive cell-death response (HR), accumulation of autofluorescent compounds, cell-wall reinforcement with callose and lignin deposition, salicylic acid accumulation, and expression of defense-related genes, such as PR1, PG1, MYB30, RBOH-D, RBOH-F, CHI23, and FLS. The oxidative burst consists in a progressive extracellular accumulation of H(2)O(2) that starts immediately after the contact with AsES and is preceded by a rapid and transient cell membrane depolarization. During this phase takes place also a rapid intracellular accumulation of NO at the chloroplasts. After the first extracellular H(2)O(2) production phase, two intracellular H(2)O(2) accumulation events occur, the first 2 hours after induction, and the second 7 hours after induction. AsES also produces a transient increase of ion leakage, and a progressive alkalinization of the extracellular medium. Confers also local and systemic plant resistance against Botrytis cinerea in Arabidopsis thaliana. Systemic, but not local resistance is dependent on the length of exposure to AsES. The protection to B.cinerea is due to the induction of the plant defenses via the salicylic acid, jasmonic acid and ethylene signaling pathways. Exhibits subtilisin-like proteolytic activity which is necessary but not sufficient for its elicitor function in strawberry plants. Probably induces defense by means of proteolysis of one or multiple host proteins that are specific targets of this protease. The protein is Subtilisin-like serine protease AsES of Sarocladium strictum (Black bundle disease fungus).